A 218-amino-acid polypeptide reads, in one-letter code: GCN5-related N-acetyltransferase 9 (218 aa).

The 148-residue stretch at 36–183 (SALLEATGSE…KEVTLEYPVT (148 aa)) folds into the N-acetyltransferase domain. Acetyl-CoA is bound by residues 112 to 114 (MIA), 120 to 125 (GKGLGK), 152 to 154 (NTA), and Phe-159.

This sequence belongs to the acetyltransferase family. GNAT subfamily. In terms of assembly, oligomer. In terms of tissue distribution, expressed throughout the plant.

It localises to the cytoplasm. Its subcellular location is the nucleus. It carries out the reaction an N-terminal L-alpha-aminoacyl-[protein] + acetyl-CoA = N-terminal N(alpha)-acetyl-L-alpha-aminoacyl-[protein] + CoA + H(+). It catalyses the reaction L-lysyl-[protein] + acetyl-CoA = N(6)-acetyl-L-lysyl-[protein] + CoA + H(+). Functionally, probable protein acetyltransferase with dual specificity triggering both N-alpha-acetylation (NTA) and epsilon-lysine acetylation (KA). This is GCN5-related N-acetyltransferase 9 from Arabidopsis thaliana (Mouse-ear cress).